Reading from the N-terminus, the 859-residue chain is DNA mismatch repair protein MutS (859 aa).

An ATP-binding site is contributed by 617 to 624 (GPNMGGKS). Positions 799 to 821 (ETTSLPHEQPRAKPGKPAVPQQS) are disordered.

The protein belongs to the DNA mismatch repair MutS family.

Functionally, this protein is involved in the repair of mismatches in DNA. It is possible that it carries out the mismatch recognition step. This protein has a weak ATPase activity. In Pseudomonas syringae pv. syringae (strain B728a), this protein is DNA mismatch repair protein MutS.